A 262-amino-acid chain; its full sequence is Hydroxyethylthiazole kinase (262 aa).

Substrate is bound at residue methionine 50. 2 residues coordinate ATP: arginine 125 and threonine 171. Glycine 198 is a binding site for substrate.

It belongs to the Thz kinase family. Requires Mg(2+) as cofactor.

It catalyses the reaction 5-(2-hydroxyethyl)-4-methylthiazole + ATP = 4-methyl-5-(2-phosphooxyethyl)-thiazole + ADP + H(+). It functions in the pathway cofactor biosynthesis; thiamine diphosphate biosynthesis; 4-methyl-5-(2-phosphoethyl)-thiazole from 5-(2-hydroxyethyl)-4-methylthiazole: step 1/1. Catalyzes the phosphorylation of the hydroxyl group of 4-methyl-5-beta-hydroxyethylthiazole (THZ). This chain is Hydroxyethylthiazole kinase, found in Shigella boydii serotype 18 (strain CDC 3083-94 / BS512).